The sequence spans 292 residues: Glycinyltransferase (292 aa).

It belongs to the thymidine aminotransferase family.

It catalyses the reaction 5-phosphomethyl-dUMP in DNA + glycine = 5-N(alpha)-glycyl-dTMP in DNA + phosphate. In terms of biological role, transfers glycine to 5-phosphomethyl-2'-deoxyuridine (5-PmdU) to produce 5-Nalpha-glycinylthymidine (Nalpha-GlyT) on DNA as a step in the pathway leading to thymidine hypermodifications in the viral genome. As a final result of the pathway of hypermodification, 5-acetylaminomethyl-2'-deoxyuridine (5-AcNmdU) substitutes for a subset of thymidines in the viral DNA. These modifications probably prevent degradation of viral genome by the host restriction-modification antiviral defense system. The chain is Glycinyltransferase from Pseudomonas phage PaMx11.